We begin with the raw amino-acid sequence, 187 residues long: PRA1 family protein G1 (187 aa).

Helical transmembrane passes span Leu84 to Leu104, Val125 to Gln145, and Cys146 to Asn166.

The protein belongs to the PRA1 family. In terms of tissue distribution, expressed in roots and lateral roots.

It localises to the endosome membrane. In terms of biological role, may be involved in both secretory and endocytic intracellular trafficking in the endosomal/prevacuolar compartments. In Arabidopsis thaliana (Mouse-ear cress), this protein is PRA1 family protein G1 (PRA1G1).